A 424-amino-acid polypeptide reads, in one-letter code: Protein maelstrom 1 (424 aa).

The segment at residues 2–69 (PPKKHSGFMM…LTRVKKERLN (68 aa)) is a DNA-binding region (HMG box).

The protein belongs to the maelstrom family.

It localises to the cytoplasm. Its subcellular location is the nucleus. Its function is as follows. Involved both in the piRNA and miRNA metabolic processes. As a component of the meiotic nuage, plays a central role during oogenesis by repressing transposable elements and preventing their mobilization, which is essential for the germline integrity. Repression of transposable elements is mediated via the piRNA metabolic process, which mediates the repression of transposable elements during meiosis by forming complexes composed of piRNAs and Piwi proteins and governs the repression of transposons. As a nuclear component, it is required for proper differentiation in the germline stem cell (GSC) lineage by repressing microRNA-7 (miR-7), thereby acting as an indirect regulator of bag-of-marbles (Bam). Acts by binding to the promoter of miR-7 gene and repressing its expression; miR-7 repression alleviates the Bam repression by miR-7, thereby allowing differentiation in the germline stem cell (GSC) lineage. In Drosophila ananassae (Fruit fly), this protein is Protein maelstrom 1 (mael1).